The primary structure comprises 802 residues: uncharacterized protein (802 aa).

The region spanning 6–41 (SRSEKVKRIFQQFDGNLDGGLSREEMSALVVAVNPR) is the EF-hand 1 domain. 7 TPR repeats span residues 229-262 (FDGH…QPTD), 264-296 (RPHF…AESG), 305-338 (PQIY…CPTH), 339-372 (YRAL…KPDY), 373-406 (ADAH…KPGH), 407-440 (VDAL…WPNH), and 442-474 (RAQL…TNRV). The 36-residue stretch at 595-630 (AIKAINEKILSVLDDSGSGRVDLGMFYAVIAPLCGG) folds into the EF-hand 2 domain.

This is an uncharacterized protein from Arabidopsis thaliana (Mouse-ear cress).